Consider the following 338-residue polypeptide: Ketol-acid reductoisomerase (NADP(+)) (338 aa).

In terms of domain architecture, KARI N-terminal Rossmann spans 1–181; that stretch reads MKVFYDKDCD…GGGRTGIIET (181 aa). NADP(+)-binding positions include 24–27, Arg-47, Ser-50, Thr-52, and 82–85; these read YGSQ and DEFQ. Residue His-107 is part of the active site. Position 133 (Gly-133) interacts with NADP(+). The region spanning 182–327 is the KARI C-terminal knotted domain; that stretch reads TFKDETETDL…EKLRSMMPWI (146 aa). Mg(2+) contacts are provided by Asp-190, Glu-194, Glu-226, and Glu-230. Ser-251 contacts substrate.

This sequence belongs to the ketol-acid reductoisomerase family. The cofactor is Mg(2+).

The enzyme catalyses (2R)-2,3-dihydroxy-3-methylbutanoate + NADP(+) = (2S)-2-acetolactate + NADPH + H(+). It carries out the reaction (2R,3R)-2,3-dihydroxy-3-methylpentanoate + NADP(+) = (S)-2-ethyl-2-hydroxy-3-oxobutanoate + NADPH + H(+). It participates in amino-acid biosynthesis; L-isoleucine biosynthesis; L-isoleucine from 2-oxobutanoate: step 2/4. It functions in the pathway amino-acid biosynthesis; L-valine biosynthesis; L-valine from pyruvate: step 2/4. Its function is as follows. Involved in the biosynthesis of branched-chain amino acids (BCAA). Catalyzes an alkyl-migration followed by a ketol-acid reduction of (S)-2-acetolactate (S2AL) to yield (R)-2,3-dihydroxy-isovalerate. In the isomerase reaction, S2AL is rearranged via a Mg-dependent methyl migration to produce 3-hydroxy-3-methyl-2-ketobutyrate (HMKB). In the reductase reaction, this 2-ketoacid undergoes a metal-dependent reduction by NADPH to yield (R)-2,3-dihydroxy-isovalerate. The polypeptide is Ketol-acid reductoisomerase (NADP(+)) (Pseudomonas syringae pv. tomato (strain ATCC BAA-871 / DC3000)).